The following is a 492-amino-acid chain: MNTQQLAKLRTIVPEMRRVRHIHFVGIGGAGMGGIAEVLANEGYQISGSDLAPNPVTQQLSALGATIYFHHRPENVLDASVVVVSTAISADNPELVAAREARIPVIRRAEMLAELMRFRHGIAVAGTHGKTTTTAMVSSIYAEAGLDPTFVNGGLVKAAGTHARLGSSRYLIAEADESDASFLHLQPMVAIVTNIEADHMETYQGDFENLKQTFINFLHNLPFYGRAVMCVDDPVVRELLPRVGRHITTYGFSDDADVRIESYRQVGPQGHFTLSRQDKPLMTVTLNAPGRHNALNAAAAVAVATEEGIDDADILRALAGFQGTGRRFDFLGEFPLEPVNGKSGSAMLVDDYGHHPTEVDATLKAARAGWPDKRLVMVFQPHRYTRTRDLYDDFANVLSQVDVLLMLDVYSAGETAIPGADSRSLCRTIRSRGKLDPILVSDADTVPETLAQLLQADDLVLVQGAGNVGKVARKLAELKLQPQKKEEEHHGR.

126–132 contacts ATP; sequence GTHGKTT.

Belongs to the MurCDEF family.

It localises to the cytoplasm. The enzyme catalyses UDP-N-acetyl-alpha-D-muramate + L-alanine + ATP = UDP-N-acetyl-alpha-D-muramoyl-L-alanine + ADP + phosphate + H(+). The protein operates within cell wall biogenesis; peptidoglycan biosynthesis. In terms of biological role, cell wall formation. This Serratia proteamaculans (strain 568) protein is UDP-N-acetylmuramate--L-alanine ligase.